Here is a 131-residue protein sequence, read N- to C-terminus: UPF0102 protein YraN (131 aa).

The segment at 1–20 (MATVPTRSGSPRQLTTKQTG) is disordered.

Belongs to the UPF0102 family.

This Escherichia coli O139:H28 (strain E24377A / ETEC) protein is UPF0102 protein YraN.